Here is a 193-residue protein sequence, read N- to C-terminus: Ribosome maturation factor RimM (193 aa).

Residues 100–173 (DDEFYYADLE…TLLIDPLAAG (74 aa)) form the PRC barrel domain.

This sequence belongs to the RimM family. In terms of assembly, binds ribosomal protein uS19.

It localises to the cytoplasm. Functionally, an accessory protein needed during the final step in the assembly of 30S ribosomal subunit, possibly for assembly of the head region. Essential for efficient processing of 16S rRNA. May be needed both before and after RbfA during the maturation of 16S rRNA. It has affinity for free ribosomal 30S subunits but not for 70S ribosomes. The polypeptide is Ribosome maturation factor RimM (Rhizobium etli (strain CIAT 652)).